Reading from the N-terminus, the 195-residue chain is Holliday junction branch migration complex subunit RuvA (195 aa).

The tract at residues 1–64 is domain I; it reads MIKGVEGEIT…DRAPEIYGFK (64 aa). The segment at 65–137 is domain II; that stretch reads DRAEYNVFLM…LYDLVKDYAV (73 aa). The segment at 137-141 is flexible linker; the sequence is VEFPK. Residues 142–195 form a domain III region; sequence ELSDVSEDAVGALTALGFDMTSAKLAVNEVLKEQTVENTQELVRKALRKLNKTR.

The protein belongs to the RuvA family. Homotetramer. Forms an RuvA(8)-RuvB(12)-Holliday junction (HJ) complex. HJ DNA is sandwiched between 2 RuvA tetramers; dsDNA enters through RuvA and exits via RuvB. An RuvB hexamer assembles on each DNA strand where it exits the tetramer. Each RuvB hexamer is contacted by two RuvA subunits (via domain III) on 2 adjacent RuvB subunits; this complex drives branch migration. In the full resolvosome a probable DNA-RuvA(4)-RuvB(12)-RuvC(2) complex forms which resolves the HJ.

It localises to the cytoplasm. Functionally, the RuvA-RuvB-RuvC complex processes Holliday junction (HJ) DNA during genetic recombination and DNA repair, while the RuvA-RuvB complex plays an important role in the rescue of blocked DNA replication forks via replication fork reversal (RFR). RuvA specifically binds to HJ cruciform DNA, conferring on it an open structure. The RuvB hexamer acts as an ATP-dependent pump, pulling dsDNA into and through the RuvAB complex. HJ branch migration allows RuvC to scan DNA until it finds its consensus sequence, where it cleaves and resolves the cruciform DNA. The polypeptide is Holliday junction branch migration complex subunit RuvA (Kosmotoga olearia (strain ATCC BAA-1733 / DSM 21960 / TBF 19.5.1)).